A 440-amino-acid polypeptide reads, in one-letter code: Serine hydroxymethyltransferase (440 aa).

Residues leucine 119 and 123-125 (GHL) each bind (6S)-5,6,7,8-tetrahydrofolate. The residue at position 228 (lysine 228) is an N6-(pyridoxal phosphate)lysine. 370-372 (SPF) contacts (6S)-5,6,7,8-tetrahydrofolate.

Belongs to the SHMT family. As to quaternary structure, homodimer. Pyridoxal 5'-phosphate is required as a cofactor.

The protein localises to the cytoplasm. The catalysed reaction is (6R)-5,10-methylene-5,6,7,8-tetrahydrofolate + glycine + H2O = (6S)-5,6,7,8-tetrahydrofolate + L-serine. The protein operates within one-carbon metabolism; tetrahydrofolate interconversion. It functions in the pathway amino-acid biosynthesis; glycine biosynthesis; glycine from L-serine: step 1/1. In terms of biological role, catalyzes the reversible interconversion of serine and glycine with tetrahydrofolate (THF) serving as the one-carbon carrier. This reaction serves as the major source of one-carbon groups required for the biosynthesis of purines, thymidylate, methionine, and other important biomolecules. Also exhibits THF-independent aldolase activity toward beta-hydroxyamino acids, producing glycine and aldehydes, via a retro-aldol mechanism. The chain is Serine hydroxymethyltransferase from Chlorobaculum tepidum (strain ATCC 49652 / DSM 12025 / NBRC 103806 / TLS) (Chlorobium tepidum).